Reading from the N-terminus, the 134-residue chain is ATP synthase epsilon chain (134 aa).

The protein belongs to the ATPase epsilon chain family. F-type ATPases have 2 components, CF(1) - the catalytic core - and CF(0) - the membrane proton channel. CF(1) has five subunits: alpha(3), beta(3), gamma(1), delta(1), epsilon(1). CF(0) has three main subunits: a, b and c.

The protein localises to the cell membrane. In terms of biological role, produces ATP from ADP in the presence of a proton gradient across the membrane. The sequence is that of ATP synthase epsilon chain from Alkaliphilus oremlandii (strain OhILAs) (Clostridium oremlandii (strain OhILAs)).